We begin with the raw amino-acid sequence, 1045 residues long: 3-hydroxy-3-methylglutaryl-coenzyme A reductase 2 (1045 aa).

Topologically, residues 1–24 (MSLPLKTIVHLVKPFACTARFSAR) are cytoplasmic. The chain crosses the membrane as a helical span at residues 25–45 (YPIHVIVVAVLLSAAAYLSVT). Topologically, residues 46-186 (QSYLNEWKLD…FSNKTSEFDQ (141 aa)) are lumenal. Residues N115, N150, N158, and N179 are each glycosylated (N-linked (GlcNAc...) asparagine). A helical membrane pass occupies residues 187–207 (FDLFIILAAYLTLFYTLCCLF). The 169-residue stretch at 188–356 (DLFIILAAYL…ATFYSAILSM (169 aa)) folds into the SSD domain. The Cytoplasmic segment spans residues 208–216 (NDMRKIGSK). A helical membrane pass occupies residues 217 to 237 (FWLSFSALSNSACALYLSLYT). The Lumenal segment spans residues 238-243 (THSLLK). The chain crosses the membrane as a helical span at residues 244 to 264 (KPASLLSLVIGLPFIVVIIGF). Residues 265 to 301 (KHKVRLAAFSLQKFHRISIDKKITVSNIIYEAMFQEG) lie on the Cytoplasmic side of the membrane. Residues 302–322 (AYLIRDYLFYISSFIGCAIYA) traverse the membrane as a helical segment. Over 323 to 324 (RH) the chain is Lumenal. Residues 325–345 (LPGLVNFCILSTFMLVFDLLL) traverse the membrane as a helical segment. The Cytoplasmic segment spans residues 346–402 (SATFYSAILSMKLEINIIHRSTVIRQTLEEDGVVPTTADIIYKDETASEPHFLRSNV). Residues 403–423 (AIILGKASVIGLLLLINLYVF) form a helical membrane-spanning segment. Residues 424 to 497 (TDKLNATILN…DSVSNAIRDQ (74 aa)) lie on the Lumenal side of the membrane. N-linked (GlcNAc...) asparagine glycans are attached at residues N428 and N455. The chain crosses the membrane as a helical span at residues 498-518 (FISKLLFFAFAVSISINVYLL). The Cytoplasmic segment spans residues 519 to 1045 (NAAKIHTGYM…GPPCKTSALL (527 aa)). A Phosphothreonine modification is found at T565. Catalysis depends on E710, which acts as the Charge relay system. Residue 716-722 (SAMRGCK) coordinates CoA. NADP(+)-binding positions include 777–779 (SRF) and 804–812 (DAMGMNMIS). Catalysis depends on K844, which acts as the Charge relay system. Residue 873–875 (VLK) coordinates CoA. D920 serves as the catalytic Charge relay system. A CoA-binding site is contributed by 1015-1016 (SH). H1016 acts as the Proton donor in catalysis. A disordered region spans residues 1018–1045 (THNRKTNKANELPQPSNKGPPCKTSALL). 1020-1021 (NR) is a binding site for NADP(+).

It belongs to the HMG-CoA reductase family.

The protein resides in the endoplasmic reticulum membrane. It is found in the nucleus envelope. It carries out the reaction (R)-mevalonate + 2 NADP(+) + CoA = (3S)-3-hydroxy-3-methylglutaryl-CoA + 2 NADPH + 2 H(+). Its pathway is metabolic intermediate biosynthesis; (R)-mevalonate biosynthesis; (R)-mevalonate from acetyl-CoA: step 3/3. Functionally, HMG-CoA reductase; part of the first module of ergosterol biosynthesis pathway constitutes by the early steps of the pathway, conserved across all eukaryotes, and which results in the formation of mevalonate from acetyl-coenzyme A (acetyl-CoA). HMG1 and HMG2 catalyze the reduction of hydroxymethylglutaryl-CoA (HMG-CoA) to mevalonate that is the rate-limiting step within the first mosule. The first module starts with the action of the cytosolic acetyl-CoA acetyltransferase ERG10 that catalyzes the formation of acetoacetyl-CoA. The hydroxymethylglutaryl-CoA synthase ERG13 then condenses acetyl-CoA with acetoacetyl-CoA to form HMG-CoA. The rate-limiting step of the early module is the reduction to mevalonate by the 3-hydroxy-3-methylglutaryl-coenzyme A (HMG-CoA) reductases HMG1 and HMG2 which are derived from a single ancestral HMGR gene by gene duplication. The polypeptide is 3-hydroxy-3-methylglutaryl-coenzyme A reductase 2 (Saccharomyces cerevisiae (strain ATCC 204508 / S288c) (Baker's yeast)).